The sequence spans 194 residues: Peptidyl-tRNA hydrolase (194 aa).

Tyrosine 17 contributes to the tRNA binding site. Residue histidine 22 is the Proton acceptor of the active site. TRNA is bound by residues tyrosine 68, asparagine 70, and asparagine 116.

The protein belongs to the PTH family. In terms of assembly, monomer.

The protein resides in the cytoplasm. It catalyses the reaction an N-acyl-L-alpha-aminoacyl-tRNA + H2O = an N-acyl-L-amino acid + a tRNA + H(+). Functionally, hydrolyzes ribosome-free peptidyl-tRNAs (with 1 or more amino acids incorporated), which drop off the ribosome during protein synthesis, or as a result of ribosome stalling. Catalyzes the release of premature peptidyl moieties from peptidyl-tRNA molecules trapped in stalled 50S ribosomal subunits, and thus maintains levels of free tRNAs and 50S ribosomes. This Azotobacter vinelandii (strain DJ / ATCC BAA-1303) protein is Peptidyl-tRNA hydrolase.